The following is a 388-amino-acid chain: Succinate--CoA ligase [ADP-forming] subunit beta (388 aa).

Positions 9-244 (KEILRKFGVA…LDEEDPAEIE (236 aa)) constitute an ATP-grasp domain. ATP is bound by residues Lys46, 53-55 (GRG), Glu99, Ala102, and Glu107. Residues Asn199 and Asp213 each contribute to the Mg(2+) site. Substrate-binding positions include Asn264 and 321 to 323 (GIM).

It belongs to the succinate/malate CoA ligase beta subunit family. Heterotetramer of two alpha and two beta subunits. Mg(2+) is required as a cofactor.

It catalyses the reaction succinate + ATP + CoA = succinyl-CoA + ADP + phosphate. The enzyme catalyses GTP + succinate + CoA = succinyl-CoA + GDP + phosphate. It functions in the pathway carbohydrate metabolism; tricarboxylic acid cycle; succinate from succinyl-CoA (ligase route): step 1/1. Its function is as follows. Succinyl-CoA synthetase functions in the citric acid cycle (TCA), coupling the hydrolysis of succinyl-CoA to the synthesis of either ATP or GTP and thus represents the only step of substrate-level phosphorylation in the TCA. The beta subunit provides nucleotide specificity of the enzyme and binds the substrate succinate, while the binding sites for coenzyme A and phosphate are found in the alpha subunit. The chain is Succinate--CoA ligase [ADP-forming] subunit beta from Burkholderia vietnamiensis (strain G4 / LMG 22486) (Burkholderia cepacia (strain R1808)).